The primary structure comprises 199 residues: Glycerol-3-phosphate acyltransferase (199 aa).

The next 5 helical transmembrane spans lie at 4-24 (LVSV…FLMG), 51-71 (WAAL…AYLG), 77-97 (EWGF…PVWL), 111-131 (VMLL…ALAV), and 152-172 (LFLL…AVVI).

It belongs to the PlsY family. In terms of assembly, probably interacts with PlsX.

The protein resides in the cell membrane. The enzyme catalyses an acyl phosphate + sn-glycerol 3-phosphate = a 1-acyl-sn-glycero-3-phosphate + phosphate. It participates in lipid metabolism; phospholipid metabolism. Its function is as follows. Catalyzes the transfer of an acyl group from acyl-phosphate (acyl-PO(4)) to glycerol-3-phosphate (G3P) to form lysophosphatidic acid (LPA). This enzyme utilizes acyl-phosphate as fatty acyl donor, but not acyl-CoA or acyl-ACP. This is Glycerol-3-phosphate acyltransferase from Symbiobacterium thermophilum (strain DSM 24528 / JCM 14929 / IAM 14863 / T).